The following is a 41-amino-acid chain: MKVRSSIKSLKNRHRDCQVVKRRGRVYVINKTDPRFKARAG.

The protein belongs to the bacterial ribosomal protein bL36 family.

This is Large ribosomal subunit protein bL36 from Maricaulis maris (strain MCS10) (Caulobacter maris).